The following is a 244-amino-acid chain: Mannose-binding protein C (244 aa).

The N-terminal stretch at 1-18 is a signal peptide; it reads MSIFTSFLLLCVVTVVYA. A Collagen-like domain is found at 38–96; it reads GLNGFPGKDGRDGAKGEKGEPGQGLRGLQGPPGKVGPTGPPGNPGLKGAVGPKGDRGDR. A disordered region spans residues 40 to 101; it reads NGFPGKDGRD…DRGDRAEFDT (62 aa). Position 43 is a 4-hydroxyproline (Pro-43). A compositionally biased stretch (basic and acidic residues) spans 45–57; that stretch reads KDGRDGAKGEKGE. A 4-hydroxyproline mark is found at Pro-58, Pro-69, Pro-78, and Pro-81. Positions 65 to 74 are enriched in low complexity; that stretch reads LQGPPGKVGP. Positions 90–99 are enriched in basic and acidic residues; that stretch reads KGDRGDRAEF. Residues 108 to 126 are a coiled coil; the sequence is IAALRSELRALRNWVLFSL. Residues 129-241 form the C-type lectin domain; that stretch reads KVGKKYFVSS…CSDSFLAICE (113 aa). 2 disulfides stabilise this stretch: Cys-151/Cys-240 and Cys-218/Cys-232. N-linked (GlcNAc...) asparagine glycosylation is present at Asn-210.

As to quaternary structure, oligomeric complex of 3 or more homotrimers. Interacts with MASP1 and MASP2. Interacts with MEP1A and MEP1B and may inhibit their catalytic activity. In terms of processing, hydroxylation on proline residues within the sequence motif, GXPG, is most likely to be 4-hydroxy as this fits the requirement for 4-hydroxylation in vertebrates.

Its subcellular location is the secreted. Calcium-dependent lectin involved in innate immune defense. Binds mannose, fucose and N-acetylglucosamine on different microorganisms and activates the lectin complement pathway. Binds to late apoptotic cells, as well as to apoptotic blebs and to necrotic cells, but not to early apoptotic cells, facilitating their uptake by macrophages. This is Mannose-binding protein C (Mbl2) from Mus musculus (Mouse).